We begin with the raw amino-acid sequence, 363 residues long: Two-pore potassium channel 1 (363 aa).

Residues 1 to 61 (MSSDAARTPL…DDVKIDEPPP (61 aa)) form a disordered region. Residues 1–78 (MSSDAARTPL…FSDLNPNLRR (78 aa)) lie on the Cytoplasmic side of the membrane. Residues 31–42 (SSRKRRLRRSRS) are compositionally biased toward basic residues. A helical transmembrane segment spans residues 79-99 (VIMFLALYLTIGTLCFYLVRD). Positions 111 to 130 (DALYFCIVTMTTVGYGDLVP) form an intramembrane region, pore-forming. Residues 137–157 (LLACAFVFSGMVLVGHLLSRA) traverse the membrane as a helical segment. Over 158–197 (ADYLVEKQEALLVRAFHLRQSFGPTDILKELHTNKLRYKC) the chain is Cytoplasmic. A helical membrane pass occupies residues 198-218 (YATCLVLVVLFIVGTIFLVMV). Positions 225 to 244 (SAFYCVCSTVTTLGYGDKSF) form an intramembrane region, pore-forming. A helical transmembrane segment spans residues 251–271 (LFAVFWILTSSICLAQFFLYV). Topologically, residues 272–363 (AELNTENKQR…LAQTTSQIQR (92 aa)) are cytoplasmic. 2 EF-hand domains span residues 288 to 323 (LTRR…EMGK) and 327 to 362 (KDIS…SQIQ). An Endoplasmic reticulum release signal motif is present at residues 296–298 (DLE). Ca(2+) is bound by residues aspartate 301, aspartate 303, aspartate 305, glutamate 312, aspartate 340, aspartate 342, serine 344, threonine 346, and aspartate 351.

Belongs to the two pore domain potassium channel (TC 1.A.1.7) family. In terms of assembly, homodimer. Interacts with GRF1 and GRF6, but only GRF6 modulates the channel activity. In terms of processing, phosphorylation at Ser-42 increases and stabilizes the interaction with 14-3-3 proteins. In terms of tissue distribution, detected in mesophyll cells, guard cells and vascular tissues of the leaves. Expressed in the hilum, where the funiculus is attached during fruit maturation and in the embryo. Also expressed at a lower level in seedlings, root tips and elongation zones, and flowers. Could be detected in mitotically active tissues.

Its subcellular location is the vacuole membrane. Its activity is regulated as follows. Could be activated by protein kinase C. Strongly induced by calcium. Blocked by barium, tetraethylammonium (TEA), quinine and quinidine. Its function is as follows. Voltage-independent, large conductance and potassium-selective tonoplast ion channel. Regulated by cytoplasmic calcium and pH. Does not mediate slow-vacuolar (SV) ionic currents, but essential to establish VK currents. Has some permeability for Rb(+) and NH(4)(+), but none for Na(+), Cs(+) or Li(+). Involved in intracellular K(+) redistribution and/or K(+) retranslocation between different tissues. The polypeptide is Two-pore potassium channel 1 (TPK1) (Arabidopsis thaliana (Mouse-ear cress)).